The sequence spans 365 residues: Transcription elongation factor, mitochondrial (365 aa).

A mitochondrion-targeting transit peptide spans methionine 1 to lysine 40.

This sequence belongs to the TEFM family. In terms of assembly, interacts with POLRMT.

It is found in the mitochondrion matrix. It localises to the mitochondrion nucleoid. Transcription elongation factor which increases mitochondrial RNA polymerase processivity. Regulates transcription of the mitochondrial genome, including genes important for the oxidative phosphorylation machinery. This chain is Transcription elongation factor, mitochondrial (Tefm), found in Rattus norvegicus (Rat).